A 1136-amino-acid chain; its full sequence is Tyrosine-protein kinase receptor Tie-1 (1136 aa).

The signal sequence occupies residues 1-23 (MVWLEPPLLLPIFFLASHVGAAV). Residues 24-757 (DLTLLADLRL…IHAAEEGLDQ (734 aa)) are Extracellular-facing. The Ig-like C2-type 1 domain occupies 43-106 (CVSGEAGAGR…PSDLVGVFSC (64 aa)). Asn-84 and Asn-159 each carry an N-linked (GlcNAc...) asparagine glycan. 3 consecutive EGF-like domains span residues 212 to 254 (GCEA…TRCE), 256 to 301 (ACRE…SQCQ), and 303 to 343 (ACAP…MHCE). 3 disulfide bridges follow: Cys-226–Cys-235, Cys-229–Cys-242, and Cys-244–Cys-253. Intrachain disulfides connect Cys-317–Cys-325, Cys-319–Cys-331, and Cys-333–Cys-342. Residues 370–424 (CAAAGNPFPVRGSMELRKPDGTVLLSTKAIVEPDRTTAEFEVPRLALGDSGLWEC) form the Ig-like C2-type 2 domain. 3 consecutive Fibronectin type-III domains span residues 444 to 543 (PPVP…CPEP), 546 to 640 (KPWL…LPPS), and 644 to 737 (APRH…TLGN). N-linked (GlcNAc...) asparagine glycosylation is found at Asn-501, Asn-594, and Asn-707. Residues 758-782 (QLVLAVVGSVSATCLTILAALLTLA) form a helical membrane-spanning segment. Residues 783 to 1136 (CIRKSCLHRR…AGIDATAEEA (354 aa)) are Cytoplasmic-facing. The Protein kinase domain occupies 837-1116 (ITFEDLIGEG…RMLEARKAYV (280 aa)). ATP-binding positions include 843 to 851 (IGEGNFGQV) and Lys-868. The active-site Proton acceptor is Asp-977. At Tyr-1005 the chain carries Phosphotyrosine; by autocatalysis.

It belongs to the protein kinase superfamily. Tyr protein kinase family. Tie subfamily. Heterodimer with TEK/TIE2. Interacts with SVEP1 (via C-terminus). Phosphorylated on tyrosine residues in response to ANGPT1, most likely by TEK/TIE2. Specifically expressed in developing vascular endothelial cells.

The protein resides in the cell membrane. The enzyme catalyses L-tyrosyl-[protein] + ATP = O-phospho-L-tyrosyl-[protein] + ADP + H(+). Its function is as follows. Transmembrane tyrosine-protein kinase that may modulate TEK/TIE2 activity and contribute to the regulation of angiogenesis. The polypeptide is Tyrosine-protein kinase receptor Tie-1 (TIE1) (Bos taurus (Bovine)).